The primary structure comprises 270 residues: Putative pyruvate, phosphate dikinase regulatory protein (270 aa).

Residue 147-154 (GVSRSSKT) participates in ADP binding.

The protein belongs to the pyruvate, phosphate/water dikinase regulatory protein family. PDRP subfamily.

It catalyses the reaction N(tele)-phospho-L-histidyl/L-threonyl-[pyruvate, phosphate dikinase] + ADP = N(tele)-phospho-L-histidyl/O-phospho-L-threonyl-[pyruvate, phosphate dikinase] + AMP + H(+). It carries out the reaction N(tele)-phospho-L-histidyl/O-phospho-L-threonyl-[pyruvate, phosphate dikinase] + phosphate + H(+) = N(tele)-phospho-L-histidyl/L-threonyl-[pyruvate, phosphate dikinase] + diphosphate. Functionally, bifunctional serine/threonine kinase and phosphorylase involved in the regulation of the pyruvate, phosphate dikinase (PPDK) by catalyzing its phosphorylation/dephosphorylation. This Citrifermentans bemidjiense (strain ATCC BAA-1014 / DSM 16622 / JCM 12645 / Bem) (Geobacter bemidjiensis) protein is Putative pyruvate, phosphate dikinase regulatory protein.